The following is a 160-amino-acid chain: Allophycocyanin alpha chain (160 aa).

At Asn-70 the chain carries N4-methylasparagine. Cys-80 is a (2R,3E)-phycocyanobilin binding site.

Belongs to the phycobiliprotein family. In terms of assembly, component of the phycobilisome. Heterodimer of an alpha and a beta chain. Contains one covalently linked phycocyanobilin chromophore.

It localises to the cellular thylakoid membrane. Light-harvesting photosynthetic bile pigment-protein from the phycobiliprotein complex. Allophycocyanin has a maximum absorption at approximately 650 nanometers. This is Allophycocyanin alpha chain (apcA) from Anabaena cylindrica.